We begin with the raw amino-acid sequence, 251 residues long: Imidazole glycerol phosphate synthase subunit HisF (251 aa).

Active-site residues include D11 and D130.

Belongs to the HisA/HisF family. In terms of assembly, heterodimer of HisH and HisF.

It localises to the cytoplasm. It carries out the reaction 5-[(5-phospho-1-deoxy-D-ribulos-1-ylimino)methylamino]-1-(5-phospho-beta-D-ribosyl)imidazole-4-carboxamide + L-glutamine = D-erythro-1-(imidazol-4-yl)glycerol 3-phosphate + 5-amino-1-(5-phospho-beta-D-ribosyl)imidazole-4-carboxamide + L-glutamate + H(+). It participates in amino-acid biosynthesis; L-histidine biosynthesis; L-histidine from 5-phospho-alpha-D-ribose 1-diphosphate: step 5/9. IGPS catalyzes the conversion of PRFAR and glutamine to IGP, AICAR and glutamate. The HisF subunit catalyzes the cyclization activity that produces IGP and AICAR from PRFAR using the ammonia provided by the HisH subunit. This is Imidazole glycerol phosphate synthase subunit HisF from Chlorobaculum tepidum (strain ATCC 49652 / DSM 12025 / NBRC 103806 / TLS) (Chlorobium tepidum).